A 597-amino-acid polypeptide reads, in one-letter code: uncharacterized protein (597 aa).

The segment covering 1 to 23 (MSHEGSRQARDRGVTRSKAEKAR) has biased composition (basic and acidic residues). 2 disordered regions span residues 1-32 (MSHE…VPQV) and 171-192 (RESQ…NPRP). Low complexity predominate over residues 175-186 (EPTQSSEPSAEP). Phosphoserine occurs at positions 237 and 241. Disordered regions lie at residues 302 to 335 (SLLS…MRLD) and 549 to 569 (EAEE…GVSK). Residues 557–568 (APEQQPIQTGVS) show a composition bias toward polar residues.

This is an uncharacterized protein from Rattus norvegicus (Rat).